Consider the following 371-residue polypeptide: Putative agmatine deiminase (371 aa).

C361 serves as the catalytic Amidino-cysteine intermediate.

Belongs to the agmatine deiminase family.

It carries out the reaction agmatine + H2O = N-carbamoylputrescine + NH4(+). This is Putative agmatine deiminase from Selenomonas ruminantium.